The chain runs to 246 residues: Acetoacetate decarboxylase (246 aa).

Lys-116 functions as the Schiff-base intermediate with acetoacetate in the catalytic mechanism.

Belongs to the ADC family.

The enzyme catalyses acetoacetate + H(+) = acetone + CO2. Functionally, catalyzes the conversion of acetoacetate to acetone and carbon dioxide. This Burkholderia cenocepacia (strain ATCC BAA-245 / DSM 16553 / LMG 16656 / NCTC 13227 / J2315 / CF5610) (Burkholderia cepacia (strain J2315)) protein is Acetoacetate decarboxylase.